The following is a 358-amino-acid chain: Homoserine O-succinyltransferase (358 aa).

Cysteine 146 acts as the Acyl-thioester intermediate in catalysis. Positions 167 and 196 each coordinate substrate. Histidine 239 acts as the Proton acceptor in catalysis. Residue glutamate 241 is part of the active site. Residue arginine 253 participates in substrate binding.

It belongs to the MetA family.

It is found in the cytoplasm. The enzyme catalyses L-homoserine + succinyl-CoA = O-succinyl-L-homoserine + CoA. Its pathway is amino-acid biosynthesis; L-methionine biosynthesis via de novo pathway; O-succinyl-L-homoserine from L-homoserine: step 1/1. Functionally, transfers a succinyl group from succinyl-CoA to L-homoserine, forming succinyl-L-homoserine. The chain is Homoserine O-succinyltransferase from Nitrosococcus oceani (strain ATCC 19707 / BCRC 17464 / JCM 30415 / NCIMB 11848 / C-107).